Here is a 378-residue protein sequence, read N- to C-terminus: UDP-N-acetylglucosamine--N-acetylmuramyl-(pentapeptide) pyrophosphoryl-undecaprenol N-acetylglucosamine transferase (378 aa).

Residues T14 to G16, N125, R165, S193, and Q293 contribute to the UDP-N-acetyl-alpha-D-glucosamine site.

This sequence belongs to the glycosyltransferase 28 family. MurG subfamily.

The protein localises to the cell inner membrane. It catalyses the reaction di-trans,octa-cis-undecaprenyl diphospho-N-acetyl-alpha-D-muramoyl-L-alanyl-D-glutamyl-meso-2,6-diaminopimeloyl-D-alanyl-D-alanine + UDP-N-acetyl-alpha-D-glucosamine = di-trans,octa-cis-undecaprenyl diphospho-[N-acetyl-alpha-D-glucosaminyl-(1-&gt;4)]-N-acetyl-alpha-D-muramoyl-L-alanyl-D-glutamyl-meso-2,6-diaminopimeloyl-D-alanyl-D-alanine + UDP + H(+). It participates in cell wall biogenesis; peptidoglycan biosynthesis. Its function is as follows. Cell wall formation. Catalyzes the transfer of a GlcNAc subunit on undecaprenyl-pyrophosphoryl-MurNAc-pentapeptide (lipid intermediate I) to form undecaprenyl-pyrophosphoryl-MurNAc-(pentapeptide)GlcNAc (lipid intermediate II). This Bartonella tribocorum (strain CIP 105476 / IBS 506) protein is UDP-N-acetylglucosamine--N-acetylmuramyl-(pentapeptide) pyrophosphoryl-undecaprenol N-acetylglucosamine transferase.